Consider the following 132-residue polypeptide: UPF0299 membrane protein YohJ (132 aa).

Transmembrane regions (helical) follow at residues 7–27, 31–51, 63–83, and 93–113; these read IIWQ…AGIF, LLPI…VLLA, GCYV…VGVM, and FGPV…VVSW.

This sequence belongs to the UPF0299 family.

The protein resides in the cell inner membrane. The sequence is that of UPF0299 membrane protein YohJ from Salmonella arizonae (strain ATCC BAA-731 / CDC346-86 / RSK2980).